A 24-amino-acid chain; its full sequence is M-poneritoxin-Ng1e (24 aa).

As to expression, expressed by the venom gland.

The protein resides in the secreted. Its subcellular location is the target cell membrane. Functionally, has a broad spectrum of activity against both Gram-positive and Gram-negative bacteria and S.cerevisiae. Has insecticidal and hemolytic activities. May act by disrupting the integrity of the bacterial cell membrane. The sequence is that of M-poneritoxin-Ng1e from Neoponera goeldii (Ponerine ant).